Consider the following 92-residue polypeptide: Small ribosomal subunit protein uS19 (92 aa).

This sequence belongs to the universal ribosomal protein uS19 family.

Its function is as follows. Protein S19 forms a complex with S13 that binds strongly to the 16S ribosomal RNA. The chain is Small ribosomal subunit protein uS19 from Prochlorococcus marinus (strain MIT 9301).